A 917-amino-acid chain; its full sequence is Gamma-tubulin complex component 3 (917 aa).

The protein belongs to the TUBGCP family. Gamma-tubulin small complex (Gamma TuSC) is a heterotetrameric complex which contains two molecules of gamma-tubulin, and one molecule each of Dgrip84 and Dgrip91. The gamma-tubulin in this complex binds preferentially to GDP over GTP.

Its subcellular location is the cytoplasm. It localises to the cytoskeleton. The protein localises to the microtubule organizing center. It is found in the centrosome. The protein resides in the perinuclear region. This chain is Gamma-tubulin complex component 3, found in Drosophila melanogaster (Fruit fly).